The following is a 201-amino-acid chain: LexA repressor 1 (201 aa).

Positions 27-47 (LAEIAQAFGFASRNAAQKHVQ) form a DNA-binding region, H-T-H motif. Active-site for autocatalytic cleavage activity residues include serine 122 and lysine 159.

The protein belongs to the peptidase S24 family. Homodimer.

The enzyme catalyses Hydrolysis of Ala-|-Gly bond in repressor LexA.. In terms of biological role, represses a number of genes involved in the response to DNA damage (SOS response), including recA and lexA. In the presence of single-stranded DNA, RecA interacts with LexA causing an autocatalytic cleavage which disrupts the DNA-binding part of LexA, leading to derepression of the SOS regulon and eventually DNA repair. The chain is LexA repressor 1 from Xanthomonas oryzae pv. oryzae (strain KACC10331 / KXO85).